A 186-amino-acid chain; its full sequence is Inosine/xanthosine triphosphatase (186 aa).

Gln-75 lines the Mg(2+) pocket.

It belongs to the YjjX NTPase family. In terms of assembly, homodimer. Requires Mg(2+) as cofactor. Mn(2+) serves as cofactor.

It carries out the reaction XTP + H2O = XDP + phosphate + H(+). The enzyme catalyses ITP + H2O = IDP + phosphate + H(+). Its function is as follows. Phosphatase that hydrolyzes non-canonical purine nucleotides such as XTP and ITP to their respective diphosphate derivatives. Probably excludes non-canonical purines from DNA/RNA precursor pool, thus preventing their incorporation into DNA/RNA and avoiding chromosomal lesions. The sequence is that of Inosine/xanthosine triphosphatase from Shewanella baltica (strain OS185).